We begin with the raw amino-acid sequence, 278 residues long: MKRSYKDIIRFLKLIGISHSTAIKLVDGILPVMIGLKTSYLVDCVFLEISELREIIEFVGPDCLRGIYFTEPISQCFVLHVANWEEWSSIDSLVPIVVDLPSKKQNRLLQSCITKHVDRLLDLCKRNLSTFTIDISSSWRQNIIENNEQKEFECTSTAITGCLLNYGATYNYDHTLFKDNGLSCETLKLYTLEVHSKKKDVSDTLIQFSCVNQFEEPVTSNIQRLTSLYQTRWKRINSEEKRNWEEWIKHKYKIPNDTNIELEFCFSVTDRKEQSVIL.

This is an uncharacterized protein from Schizosaccharomyces pombe (strain 972 / ATCC 24843) (Fission yeast).